Consider the following 556-residue polypeptide: Tripartite motif-containing protein 16 (556 aa).

Positions Met1 to Ala60 are disordered. Over residues Val33 to Ala56 the composition is skewed to basic and acidic residues. B box-type zinc fingers lie at residues Glu64 to Pro113 and Gln117 to Ser156. Phosphoserine is present on Ser107. 2 coiled-coil regions span residues Asn163–Ala266 and Asn312–Glu332. A Phosphoserine modification is found at Ser195. The B30.2/SPRY domain occupies Tyr347–Glu545.

Belongs to the TRIM/RBCC family. Homodimerizes via its coiled-coil domain. Heterodimerizes with MID1, TRIM24 and PML. Interacts with Galectin-3/LGALS3 in a ULK1-dependent manner; this interaction mediates autophagy of damage endomembranes. Interacts with BECN1. Interacts with ATG16L1. Interacts with p62/SQSTM and LC3B/MAP1LC3B. Post-translationally, phosphorylated by ULK1. Auto-ubiquitinates via its B-Boxes. In terms of tissue distribution, widely expressed. Expressed in basal keratinocytes.

It localises to the cytoplasm. It carries out the reaction S-ubiquitinyl-[E2 ubiquitin-conjugating enzyme]-L-cysteine + [acceptor protein]-L-lysine = [E2 ubiquitin-conjugating enzyme]-L-cysteine + N(6)-ubiquitinyl-[acceptor protein]-L-lysine.. Its function is as follows. E3 ubiquitin ligase that plays an essential role in the organization of autophagic response and ubiquitination upon lysosomal and phagosomal damages. Plays a role in the stress-induced biogenesis and degradation of protein aggresomes by regulating the p62-KEAP1-NRF2 signaling and particularly by modulating the ubiquitination levels and thus stability of NRF2. Acts as a scaffold protein and facilitates autophagic degradation of protein aggregates by interacting with p62/SQSTM, ATG16L1 and LC3B/MAP1LC3B. In turn, protects the cell against oxidative stress-induced cell death as a consequence of endomembrane damage. This Mus musculus (Mouse) protein is Tripartite motif-containing protein 16 (Trim16).